The chain runs to 149 residues: Large ribosomal subunit protein bL9 (149 aa).

The protein belongs to the bacterial ribosomal protein bL9 family.

Functionally, binds to the 23S rRNA. This chain is Large ribosomal subunit protein bL9, found in Chromobacterium violaceum (strain ATCC 12472 / DSM 30191 / JCM 1249 / CCUG 213 / NBRC 12614 / NCIMB 9131 / NCTC 9757 / MK).